Reading from the N-terminus, the 152-residue chain is MMELMVVHPHIFWLSLGGLLLAAEMLGGNGYLLWSGVAAVITGLVVWLVPLGWEWQGVMFAILTLLAAWLWWKWLSRRVREQKHSDSHLNQRGQQLIGRRFVLESPLVNGRGHMRVGDSSWPVSASEDLGAGTHVEVIAIEGITLHIRAVSS.

A helical membrane pass occupies residues 1-21 (MMELMVVHPHIFWLSLGGLLL). Residues 22–31 (AAEMLGGNGY) are Cytoplasmic-facing. Residues 32-52 (LLWSGVAAVITGLVVWLVPLG) traverse the membrane as a helical segment. Over 53–54 (WE) the chain is Periplasmic. A helical transmembrane segment spans residues 55 to 75 (WQGVMFAILTLLAAWLWWKWL). Residues 76–152 (SRRVREQKHS…ITLHIRAVSS (77 aa)) lie on the Cytoplasmic side of the membrane.

This sequence to M.jannaschii MJ0826.

It localises to the cell inner membrane. This is Inner membrane protein YbbJ (ybbJ) from Escherichia coli (strain K12).